Consider the following 150-residue polypeptide: Small ribosomal subunit protein uS13 (150 aa).

This sequence belongs to the universal ribosomal protein uS13 family. As to quaternary structure, part of the 30S ribosomal subunit. Forms a loose heterodimer with protein S19. Forms two bridges to the 50S subunit in the 70S ribosome.

Located at the top of the head of the 30S subunit, it contacts several helices of the 16S rRNA. In the 70S ribosome it contacts the 23S rRNA (bridge B1a) and protein L5 of the 50S subunit (bridge B1b), connecting the 2 subunits; these bridges are implicated in subunit movement. The polypeptide is Small ribosomal subunit protein uS13 (Aeropyrum pernix (strain ATCC 700893 / DSM 11879 / JCM 9820 / NBRC 100138 / K1)).